Consider the following 69-residue polypeptide: Beta-defensin 122 (69 aa).

The first 19 residues, 1–19, serve as a signal peptide directing secretion; sequence MKPFLVTLAVLLLFFQVTA. Intrachain disulfides connect Cys26–Cys53, Cys33–Cys47, and Cys37–Cys54.

It belongs to the beta-defensin family.

The protein localises to the secreted. Its function is as follows. Has antibacterial activity. The sequence is that of Beta-defensin 122 (DEFB122) from Macaca mulatta (Rhesus macaque).